Consider the following 538-residue polypeptide: Chaperonin GroEL (538 aa).

Residues 29–32 (TIGP), 86–90 (DGTTT), G413, 476–478 (NAA), and D492 each bind ATP.

It belongs to the chaperonin (HSP60) family. In terms of assembly, forms a cylinder of 14 subunits composed of two heptameric rings stacked back-to-back. Interacts with the co-chaperonin GroES.

It is found in the cytoplasm. The catalysed reaction is ATP + H2O + a folded polypeptide = ADP + phosphate + an unfolded polypeptide.. Its function is as follows. Together with its co-chaperonin GroES, plays an essential role in assisting protein folding. The GroEL-GroES system forms a nano-cage that allows encapsulation of the non-native substrate proteins and provides a physical environment optimized to promote and accelerate protein folding. The polypeptide is Chaperonin GroEL (Staphylococcus aureus (strain bovine RF122 / ET3-1)).